The primary structure comprises 196 residues: MWFMYLLSWLSLFIQVAFITLAVAAGLYYLAELIEEYTVATSRIIKYMIWFSTAVLIGLYVFERFPTSMIGVGLFTNLVYFGLLQTFPFIMLTSPNFILSCGLVVVNHYLAFQFFAEEYYPFSEVLAYFTFCLWIIPFAFFVSLSAGENVLPSTMQPGDDVVSNYFTKGKRGKRLGILVVFSFIKEAILPSRQKIY.

The next 5 membrane-spanning stretches (helical) occupy residues 3-23 (FMYLLSWLSLFIQVAFITLAV), 42-62 (SRIIKYMIWFSTAVLIGLYVF), 70-90 (IGVGLFTNLVYFGLLQTFPFI), 97-117 (FILSCGLVVVNHYLAFQFFAE), and 125-145 (VLAYFTFCLWIIPFAFFVSLS).

This sequence belongs to the SVP26 family.

Its subcellular location is the membrane. The sequence is that of Protein TEX261 (TEX261) from Homo sapiens (Human).